A 740-amino-acid chain; its full sequence is 1,4-alpha-glucan branching enzyme GlgB (740 aa).

The Nucleophile role is filled by Asp-419. Residue Glu-472 is the Proton donor of the active site.

This sequence belongs to the glycosyl hydrolase 13 family. GlgB subfamily. Monomer.

The catalysed reaction is Transfers a segment of a (1-&gt;4)-alpha-D-glucan chain to a primary hydroxy group in a similar glucan chain.. The protein operates within glycan biosynthesis; glycogen biosynthesis. Functionally, catalyzes the formation of the alpha-1,6-glucosidic linkages in glycogen by scission of a 1,4-alpha-linked oligosaccharide from growing alpha-1,4-glucan chains and the subsequent attachment of the oligosaccharide to the alpha-1,6 position. The protein is 1,4-alpha-glucan branching enzyme GlgB of Thiobacillus denitrificans (strain ATCC 25259 / T1).